Reading from the N-terminus, the 145-residue chain is RNA polymerase I-specific transcription initiation factor RRN10 (145 aa).

In terms of assembly, component of the UAF (upstream activation factor) complex which consists of UAF30, RRN5, RRN9, RRN10, and histones H3 and H4.

It localises to the nucleus. The protein resides in the nucleolus. In terms of biological role, component of the UAF (upstream activation factor) complex which interacts with the upstream element of the RNA polymerase I promoter and forms a stable preinitiation complex. Together with SPT15/TBP UAF seems to stimulate basal transcription to a fully activated level. The chain is RNA polymerase I-specific transcription initiation factor RRN10 (RRN10) from Saccharomyces cerevisiae (strain ATCC 204508 / S288c) (Baker's yeast).